A 426-amino-acid chain; its full sequence is Glutamyl-tRNA reductase (426 aa).

Substrate-binding positions include 49–52 (TCNR), serine 107, 112–114 (EPQ), and glutamine 118. The active-site Nucleophile is cysteine 50. 187–192 (GAGETI) serves as a coordination point for NADP(+).

The protein belongs to the glutamyl-tRNA reductase family. In terms of assembly, homodimer.

It carries out the reaction (S)-4-amino-5-oxopentanoate + tRNA(Glu) + NADP(+) = L-glutamyl-tRNA(Glu) + NADPH + H(+). The protein operates within porphyrin-containing compound metabolism; protoporphyrin-IX biosynthesis; 5-aminolevulinate from L-glutamyl-tRNA(Glu): step 1/2. Catalyzes the NADPH-dependent reduction of glutamyl-tRNA(Glu) to glutamate 1-semialdehyde (GSA). The protein is Glutamyl-tRNA reductase of Ectopseudomonas mendocina (strain ymp) (Pseudomonas mendocina).